The sequence spans 195 residues: Putative lysine exporter (195 aa).

The next 6 helical transmembrane spans lie at 4–24, 30–50, 61–81, 86–106, 117–137, and 170–190; these read LLSA…WLHF, LYVL…NGIS, LMMG…SAFF, ITQG…SVVL, IAFF…PLFM, and PIAI…LVFF.

This sequence belongs to the LysO family.

It is found in the cell inner membrane. Mediates export of lysine. This is Putative lysine exporter from Haemophilus influenzae (strain ATCC 51907 / DSM 11121 / KW20 / Rd).